We begin with the raw amino-acid sequence, 272 residues long: HMP-PP phosphatase (272 aa).

The active-site Nucleophile is D8. Mg(2+) is bound by residues D8, D10, and D212.

It belongs to the HAD-like hydrolase superfamily. Cof family. It depends on Mg(2+) as a cofactor.

It catalyses the reaction 4-amino-2-methyl-5-(diphosphooxymethyl)pyrimidine + H2O = 4-amino-2-methyl-5-(phosphooxymethyl)pyrimidine + phosphate + H(+). In terms of biological role, catalyzes the hydrolysis of 4-amino-2-methyl-5-hydroxymethylpyrimidine pyrophosphate (HMP-PP) to 4-amino-2-methyl-5-hydroxymethylpyrimidine phosphate (HMP-P). This is HMP-PP phosphatase from Salmonella typhi.